Consider the following 132-residue polypeptide: ATP synthase epsilon chain (132 aa).

Belongs to the ATPase epsilon chain family. F-type ATPases have 2 components, CF(1) - the catalytic core - and CF(0) - the membrane proton channel. CF(1) has five subunits: alpha(3), beta(3), gamma(1), delta(1), epsilon(1). CF(0) has three main subunits: a, b and c.

It is found in the cell inner membrane. Produces ATP from ADP in the presence of a proton gradient across the membrane. The sequence is that of ATP synthase epsilon chain (atpC) from Aquifex aeolicus (strain VF5).